Reading from the N-terminus, the 436-residue chain is 3-ketoacyl-CoA thiolase (436 aa).

The active-site Acyl-thioester intermediate is Cys-99. Active-site proton acceptor residues include His-392 and Cys-422.

The protein belongs to the thiolase-like superfamily. Thiolase family. As to quaternary structure, heterotetramer of two alpha chains (FadJ) and two beta chains (FadI).

The protein resides in the cytoplasm. It carries out the reaction an acyl-CoA + acetyl-CoA = a 3-oxoacyl-CoA + CoA. Its pathway is lipid metabolism; fatty acid beta-oxidation. Its function is as follows. Catalyzes the final step of fatty acid oxidation in which acetyl-CoA is released and the CoA ester of a fatty acid two carbons shorter is formed. This Salmonella choleraesuis (strain SC-B67) protein is 3-ketoacyl-CoA thiolase.